The sequence spans 80 residues: Large ribosomal subunit protein bL31B (80 aa).

The protein belongs to the bacterial ribosomal protein bL31 family. Type B subfamily. In terms of assembly, part of the 50S ribosomal subunit.

This is Large ribosomal subunit protein bL31B from Xylella fastidiosa (strain M23).